The primary structure comprises 123 residues: Large ribosomal subunit protein bL12 (123 aa).

It belongs to the bacterial ribosomal protein bL12 family. Homodimer. Part of the ribosomal stalk of the 50S ribosomal subunit. Forms a multimeric L10(L12)X complex, where L10 forms an elongated spine to which 2 to 4 L12 dimers bind in a sequential fashion. Binds GTP-bound translation factors.

Functionally, forms part of the ribosomal stalk which helps the ribosome interact with GTP-bound translation factors. Is thus essential for accurate translation. This chain is Large ribosomal subunit protein bL12, found in Rhodopseudomonas palustris (strain HaA2).